The chain runs to 931 residues: Short transient receptor potential channel 6 (931 aa).

Residues 1–23 are compositionally biased toward low complexity; it reads MSQSPAFGPRRGSSPRGAAGAAA. The disordered stretch occupies residues 1–26; it reads MSQSPAFGPRRGSSPRGAAGAAARRN. Topologically, residues 1 to 438 are cytoplasmic; the sequence is MSQSPAFGPR…CSKMGKIMRG (438 aa). 4 ANK repeats span residues 97–126, 132–161, 163–189, and 218–247; these read IEEERFLDAAEYGNIPVVRKMLEECHSLNV, MGQNALQLAVANEHLEITELLLKKENLSRV, DALLLAISKGYVRIVEAILSHPAFAEG, and HDVTPIILAAHCQEYEIVHTLLRKGARIER. Residues 439–459 form a helical membrane-spanning segment; that stretch reads PFMKFVAHAASFTIFLGLLVM. Residues 460–487 lie on the Extracellular side of the membrane; it reads NAADRFEGTKLLPNETSTDNAKQLFRMK. Residue N473 is glycosylated (N-linked (GlcNAc...) asparagine). Residues 488-508 form a helical membrane-spanning segment; the sequence is TSCFSWMEMLIISWVIGMIWA. Topologically, residues 509-521 are cytoplasmic; the sequence is ECKEIWTQGPKEY. Residues 522–542 traverse the membrane as a helical segment; sequence LFELWNMLDFGMLAIFAASFI. Residues 543 to 592 are Extracellular-facing; that stretch reads ARFMAFWHASKAQSIIDANDTLKDLTKVTLGDNVKYYNLARIKWDPSDPQ. N-linked (GlcNAc...) asparagine glycosylation occurs at N561. The chain crosses the membrane as a helical span at residues 593-613; it reads IISEGLYAIAVVLSFSRIAYI. Over 614–636 the chain is Cytoplasmic; it reads LPANESFGPLQISLGRTVKDIFK. A helical transmembrane segment spans residues 637-657; the sequence is FMVIFIMVFVAFMIGMFNLYS. Residues 658–706 are Extracellular-facing; it reads YYIGAKQNEAFTTVEESFKTLFWAIFGLSEVKSVVINYNHKFIENIGYV. A helical transmembrane segment spans residues 707–727; it reads LYGVYNVTMVIVLLNMLIAMI. At 728–931 the chain is on the cytoplasmic side; it reads NSSFQEIEDD…MEPNQEETNR (204 aa). S815 carries the post-translational modification Phosphoserine.

This sequence belongs to the transient receptor (TC 1.A.4) family. STrpC subfamily. TRPC6 sub-subfamily. Homodimer; forms channel complex. Interacts with MX1 and RNF24. In terms of processing, phosphorylated by FYN, leading to an increase of TRPC6 channel activity. As to expression, expressed primarily in placenta, lung, spleen, ovary and small intestine. Expressed in podocytes and is a component of the glomerular slit diaphragm.

The protein localises to the cell membrane. It catalyses the reaction Ca(2+)(in) = Ca(2+)(out). Its activity is regulated as follows. Activated by diacylglycerol (DAG) in a membrane-delimited fashion, independently of protein kinase C. Its function is as follows. Forms a receptor-activated non-selective calcium permeant cation channel. Probably is operated by a phosphatidylinositol second messenger system activated by receptor tyrosine kinases or G-protein coupled receptors. Activated by diacylglycerol (DAG) in a membrane-delimited fashion, independently of protein kinase C. Seems not to be activated by intracellular calcium store depletion. The chain is Short transient receptor potential channel 6 from Homo sapiens (Human).